The sequence spans 245 residues: Orotidine 5'-phosphate decarboxylase (245 aa).

Residues aspartate 22, lysine 44, 71 to 80 (DLKFHDIPNT), threonine 131, arginine 192, glutamine 201, glycine 221, and arginine 222 contribute to the substrate site. The active-site Proton donor is lysine 73.

The protein belongs to the OMP decarboxylase family. Type 1 subfamily. As to quaternary structure, homodimer.

It carries out the reaction orotidine 5'-phosphate + H(+) = UMP + CO2. It participates in pyrimidine metabolism; UMP biosynthesis via de novo pathway; UMP from orotate: step 2/2. Functionally, catalyzes the decarboxylation of orotidine 5'-monophosphate (OMP) to uridine 5'-monophosphate (UMP). The sequence is that of Orotidine 5'-phosphate decarboxylase from Yersinia pestis bv. Antiqua (strain Antiqua).